The sequence spans 292 residues: Bifunctional protein FolD (292 aa).

Residues 169 to 171 (GRS) and serine 194 contribute to the NADP(+) site.

Belongs to the tetrahydrofolate dehydrogenase/cyclohydrolase family. In terms of assembly, homodimer.

It catalyses the reaction (6R)-5,10-methylene-5,6,7,8-tetrahydrofolate + NADP(+) = (6R)-5,10-methenyltetrahydrofolate + NADPH. The catalysed reaction is (6R)-5,10-methenyltetrahydrofolate + H2O = (6R)-10-formyltetrahydrofolate + H(+). It participates in one-carbon metabolism; tetrahydrofolate interconversion. Its function is as follows. Catalyzes the oxidation of 5,10-methylenetetrahydrofolate to 5,10-methenyltetrahydrofolate and then the hydrolysis of 5,10-methenyltetrahydrofolate to 10-formyltetrahydrofolate. In Nostoc punctiforme (strain ATCC 29133 / PCC 73102), this protein is Bifunctional protein FolD.